The chain runs to 30 residues: Gamma-II crystallin (30 aa).

The Beta/gamma crystallin 'Greek key' domain maps to 1–30 (GKITFYEDRNFQGRCYECSTDCPDLSPYFS).

This sequence belongs to the beta/gamma-crystallin family. As to quaternary structure, monomer.

Its function is as follows. Crystallins are the dominant structural components of the vertebrate eye lens. The chain is Gamma-II crystallin from Rhizoprionodon acutus (Milk shark).